Consider the following 1015-residue polypeptide: MTLAFKILFPRNLCALGRKELCLFPEQNRWAAISQFSQWSETNLLGGCCLLQRRKPVLALQRGHLRPRATHLTFWPGSHVGLCTGPCAMAEQRFCVDYAKRGTAGCKKCKEKIVKGVCRIGKVVPNPFSESGGDMKEWYHIKCMFEKLERARATTKKIEDLTELEGWEELEDNEKEQISQHIADLSSKAAATPKKKAAVQAKLTTTGQVTSPVKGASFITSTNPRKFSGFSAAKPNNSEQAPSSPAPGTSLSASKCDPKHKDCLLREFRKLCAMVAENPSYNTKTQIIHDFLQKGSTGGFSDGFHGDVYLTVKLLLPGVIKSVYNLNDKQIVKLFSRIFNCNPDDMARDLEQGDVSETIRIFFEQSKSFPPAAKSLLTIQEVDAFLLHLSKLTKEDEQQQALQDIASRCTANDLKCIIRLIKHDLKMNSGAKHVLDALDPNAYEAFKASRNLQDVVERVLHNEQEVEKDPGRRRALRVQASLMTPVQPMLAEACKSIEYAMKKCPNGMFSEIKYDGERVQVHKKGDHFSYFSRSLKPVLPHKVAHFKDYIPKAFPGGQSMILDSEVLLIDNNTGKPLPFGTLGVHKKAAFQDANVCLFVFDCIYFNDVSLMDRPLCERRKFLHDNMVEIRNRIMFSEMKQVTKASDLADMINRVIREGLEGLVLKDVKGTYEPGKRHWLKVKKDYLNEGAMADTADLVVLGAFYGQGSKGGMMSIFLMGCYDPDSQKWCTVTKCAGGHDDATLARLQKELVMVKISKDPSKIPSWLKINKIYYPDFIVPDPKKAAVWEITGAEFSRSEAHTADGISIRFPRCTRIRDDKDWKSATNLPQLKELYQLSKDKADFAVVAGDEASPTTGGSSGENEGTAGSAGPCKGPPSKSSASAKTTEQKLNSPSSRGGIKPIPKHSPMKPGEKLAVKSSPVKVGMKRKATDETPCLKKVLLDVFTGVRLYLPPSTPDFKRLKRYFVAFDGDLVQEFDMGSATHVLGNREKNTDAQLVSSEWIWACIRKRRLIAPC.

A PARP-type zinc finger spans residues F94 to S186. Zn(2+)-binding residues include C106, C109, H140, and C143. Residues S211, S217, S228, and S244 each carry the phosphoserine modification. The segment at G229–K255 is disordered. A compositionally biased stretch (polar residues) spans K234–A253. Interaction with DNA stretches follow at residues P279 to N282, V323 to D328, T393 to D396, and K426 to K432. Residue E511 coordinates ATP. K513 serves as the catalytic N6-AMP-lysine intermediate. Residues R518 and R533 each coordinate ATP. The Mg(2+) site is built by E565 and E660. The ATP site is built by K665, R676, and K680. Positions D849–K926 are disordered. A compositionally biased stretch (low complexity) spans T854 to K884. At S919 the chain carries Phosphoserine. The BRCT domain maps to V939 to C1015.

Belongs to the ATP-dependent DNA ligase family. In terms of assembly, isoform 3 interacts (via BRCT domain) with the nuclear DNA-repair protein XRCC1. Interacts with POLG. Interacts with POLB. It depends on Mg(2+) as a cofactor. The alpha isoform is expressed in all tissues, while the beta isoform is expressed only in the testis.

The protein resides in the nucleus. It carries out the reaction ATP + (deoxyribonucleotide)n-3'-hydroxyl + 5'-phospho-(deoxyribonucleotide)m = (deoxyribonucleotide)n+m + AMP + diphosphate.. Functionally, the alpha isoform interacts with DNA-repair protein XRCC1 and can correct defective DNA strand-break repair and sister chromatid exchange following treatment with ionizing radiation and alkylating agents. The beta isoform does not interact with XRCC1 and may be specifically involved in the completion of homologous recombination events that occur during meiotic prophase. This Mus musculus (Mouse) protein is DNA ligase 3 (Lig3).